Reading from the N-terminus, the 1345-residue chain is DNA-directed RNA polymerase subunit beta (1345 aa).

The protein belongs to the RNA polymerase beta chain family. As to quaternary structure, the RNAP catalytic core consists of 2 alpha, 1 beta, 1 beta' and 1 omega subunit. When a sigma factor is associated with the core the holoenzyme is formed, which can initiate transcription.

It catalyses the reaction RNA(n) + a ribonucleoside 5'-triphosphate = RNA(n+1) + diphosphate. DNA-dependent RNA polymerase catalyzes the transcription of DNA into RNA using the four ribonucleoside triphosphates as substrates. In Shewanella sp. (strain MR-4), this protein is DNA-directed RNA polymerase subunit beta.